The primary structure comprises 761 residues: Complement factor B (761 aa).

The first 22 residues, 1–22 (MESPQLCLVLLVLGFSSGGVSA), serve as a signal peptide directing secretion. Sushi domains follow at residues 32–97 (VSCS…ECRA), 98–157 (IRCP…ICDD), and 160–217 (GYCP…SCQD). Cystine bridges form between C34/C73, C59/C95, C100/C142, C128/C155, C162/C202, and C188/C215. Residues N119 and N139 are each glycosylated (N-linked (GlcNAc...) asparagine). One can recognise a VWFA domain in the interval 267-466 (NIYLVLDGSD…DLENVFYQMI (200 aa)). The Mg(2+) site is built by S275 and S277. N282 is a glycosylation site (N-linked (GlcNAc...) asparagine). T350 is a Mg(2+) binding site. An N-linked (GlcNAc...) asparagine glycan is attached at N375. Residues 474-754 (LCGMVWEHKK…VLPWLKDKLK (281 aa)) form the Peptidase S1 domain. 5 disulfide bridges follow: C475-C593, C508-C524, C596-C612, C653-C679, and C692-C722. Residues H523 and D573 each act as charge relay system in the active site. S696 (charge relay system) is an active-site residue.

This sequence belongs to the peptidase S1 family. As to quaternary structure, monomer. Interacts with complement C3b; this interaction is dependent on the presence of Mg(2+). Catalytic component of the C3 convertase of the alternative complement pathway, also named C3bBb, composed of complement factor B Bb and complement C3b. Catalytic component of the C5 convertase of the alternative complement pathway, also named C3bBb3b, composed of complement factor B Bb and additional molecules of complement C3b. Interacts to CFP; this interaction contributes to the stabilization of the active C3-convertase enzyme complex. The cofactor is Mg(2+). Mn(2+) is required as a cofactor. In terms of processing, cleaved by CFD following activation of the alternative complement system, generating Ba and Bb chains. Cleavage and activation takes place when CFB is already associated with complement C3b.

It is found in the secreted. The protein resides in the cell surface. It catalyses the reaction Cleavage of Arg-|-Ser bond in complement component C3 alpha-chain to yield C3a and C3b, and Arg-|-Xaa bond in complement component C5 alpha-chain to yield C5a and C5b.. Its function is as follows. Precursor of the catalytic component of the C3 and C5 convertase complexes of the alternative pathway of the complement system, a cascade of proteins that leads to phagocytosis and breakdown of pathogens and signaling that strengthens the adaptive immune system. The alternative complement pathway acts as an amplification loop that enhances other complement pathways (classical, lectin and GZMK) by promoting formation of additional C3 and C5 convertases. CFB is cleaved and activated by CFD to generate Ba and Bb chains; Bb chain constituting the catalytic component of the C3 and C5 convertases. In terms of biological role, serine protease component of the complement C3 and C5 convertase complexes of the alternative complement pathway. Following cleavage and activation by factor D (CFD), forms the C3 convertase together with complement C3b. As part of the C3 convertase, cleaves and activates C3 into C3a anaphylatoxin and C3b opsonin, the next components of the complement pathways. When an additional complement C3b molecule binds to the C3 convertase, forms the C5 convertase, which cleaves and activates C5 into C5a anaphylatoxin and C5b component of the membrane attack complex. Functionally, involved in proliferation and differentiation of preactivated B-lymphocytes, rapid spreading of peripheral blood monocytes, stimulation of lymphocyte blastogenesis and lysis of erythrocytes. This Mus musculus (Mouse) protein is Complement factor B (Cfb).